The primary structure comprises 70 residues: Putative membrane protein insertion efficiency factor (70 aa).

The protein belongs to the UPF0161 family.

It is found in the cell inner membrane. Functionally, could be involved in insertion of integral membrane proteins into the membrane. This Methylobacillus flagellatus (strain ATCC 51484 / DSM 6875 / VKM B-1610 / KT) protein is Putative membrane protein insertion efficiency factor.